The sequence spans 582 residues: Guanine nucleotide-binding protein-like NSN1 (582 aa).

Basic residues predominate over residues 1–46 (MVKRSKKSKSKRVTLKQKHKVLKKVKEHHKKKAKDAKKLGLHRKPR). The tract at residues 1–58 (MVKRSKKSKSKRVTLKQKHKVLKKVKEHHKKKAKDAKKLGLHRKPRVEKDPGIPNDWP) is disordered. Residues 2–49 (VKRSKKSKSKRVTLKQKHKVLKKVKEHHKKKAKDAKKLGLHRKPRVEK) are basic. 3 consecutive short sequence motifs (nuclear localization signal) follow at residues 5 to 12 (SKKSKSKR), 22 to 29 (LKKVKEHH), and 69 to 76 (VRRARALE). Residues 15 to 94 (LKQKHKVLKK…RKERAKKRKL (80 aa)) adopt a coiled-coil conformation. The region spanning 127-311 (YKELVKVIEL…LLDCPGVVML (185 aa)) is the CP-type G domain. The short motif at 145 to 149 (DARDP) is the DARXP motif element. Residues 175–178 (NKID) are G4. 175–178 (NKID) is a GTP binding site. Residues 202–204 (KCS) form a G5 region. Residues 260 to 267 (GLPNVGKS) are G1. 263-268 (NVGKSS) contributes to the GTP binding site. The interval 281–456 (VGATPGLTRS…NEFNPVIIPS (176 aa)) is intermediate. Positions 286–290 (GLTRS) are G2. Residues 304–307 (DCPG) and G307 each bind GTP. The G3 stretch occupies residues 304–307 (DCPG). The tract at residues 463-551 (DETMIEDESK…EEDLMDGDYD (89 aa)) is acidic. The segment at 469 to 545 (DESKTQTEEE…KKAGADEEDL (77 aa)) is disordered. Over residues 476-496 (EEEAEHESDDDESMGGEEEEE) the composition is skewed to acidic residues. Residues 497–506 (AGKTKEKSET) are compositionally biased toward basic and acidic residues. The stretch at 515–537 (AAESMLNTKKQKAEKKKRKKAKK) forms a coiled coil. The Nuclear localization signal 4 motif lies at 522–529 (TKKQKAEK). Basic residues predominate over residues 523–537 (KKQKAEKKKRKKAKK).

Belongs to the TRAFAC class YlqF/YawG GTPase family. In terms of assembly, interacts with EBP2 and PES. As to expression, mostly expressed in flowers, siliques and inflorescence apex, and, to a lower extent, in stems and leaves.

It localises to the nucleus. The protein resides in the nucleolus. Involved in the differentiation of epidermal cells, probably via the regulation of the expression of meristem-related genes (e.g. CLV3, STM, KNAT1, CUC2 and AG) and of leaf polarity-related genes (e.g. YAB5, FIL, AS2, PHB and PHV). May play a role in regulating cellular proliferation. Necessary for flower development, probably by preventing apical dominance through the down-regulation of AG expression. Required for embryogenesis, leaf and cotyledon development, as well as for leaf polarity establishment. Plays an important role in plant growth and senescence by modulating ribosome biogenesis in nucleolus. Possesses GTPAse activity in vitro. Possesses RNA binding activity in vitro. Associates with ribosomes. The polypeptide is Guanine nucleotide-binding protein-like NSN1 (Arabidopsis thaliana (Mouse-ear cress)).